Consider the following 317-residue polypeptide: Probable cell division protein WhiA (317 aa).

A DNA-binding region (H-T-H motif) is located at residues 275–308 (SLKELGEMLVPKVGKSGVNHRMRKIDELAEKLEE).

The protein belongs to the WhiA family.

Its function is as follows. Involved in cell division and chromosome segregation. The polypeptide is Probable cell division protein WhiA (Desulfitobacterium hafniense (strain Y51)).